We begin with the raw amino-acid sequence, 377 residues long: Uroporphyrinogen decarboxylase (377 aa).

Residues 40–44, Asp89, Tyr169, Ser224, and His354 each bind substrate; that span reads RQAGR.

Belongs to the uroporphyrinogen decarboxylase family. Homodimer.

It is found in the cytoplasm. It carries out the reaction uroporphyrinogen III + 4 H(+) = coproporphyrinogen III + 4 CO2. It functions in the pathway porphyrin-containing compound metabolism; protoporphyrin-IX biosynthesis; coproporphyrinogen-III from 5-aminolevulinate: step 4/4. Functionally, catalyzes the decarboxylation of four acetate groups of uroporphyrinogen-III to yield coproporphyrinogen-III. This Leifsonia xyli subsp. xyli (strain CTCB07) protein is Uroporphyrinogen decarboxylase.